Consider the following 84-residue polypeptide: Sulfur carrier protein TusA (84 aa).

Cys-19 acts as the Cysteine persulfide intermediate in catalysis.

The protein belongs to the sulfur carrier protein TusA family. Interacts with IscS.

It is found in the cytoplasm. Its pathway is tRNA modification. In terms of biological role, sulfur carrier protein involved in sulfur trafficking in the cell. Part of a sulfur-relay system required for 2-thiolation during synthesis of 2-thiouridine of the modified wobble base 5-methylaminomethyl-2-thiouridine (mnm(5)s(2)U) in tRNA. Interacts with IscS and stimulates its cysteine desulfurase activity. Accepts an activated sulfur from IscS, which is then transferred to TusD, and thus determines the direction of sulfur flow from IscS to 2-thiouridine formation. Also appears to be involved in sulfur transfer for the biosynthesis of molybdopterin. The chain is Sulfur carrier protein TusA from Yersinia pseudotuberculosis serotype O:1b (strain IP 31758).